A 735-amino-acid chain; its full sequence is Receptor-type guanylate cyclase gcy-27 (735 aa).

A glycan (N-linked (GlcNAc...) asparagine) is linked at asparagine 11. A helical membrane pass occupies residues 28–48; that stretch reads FIICTLPVPIYFVVVAIWTIN. The region spanning 188–465 is the Protein kinase domain; it reads ALTSRRRVFG…IENLRNAIAI (278 aa). The region spanning 538-668 is the Guanylate cyclase domain; sequence TVMFVQICDF…DTVNFASRMQ (131 aa).

Belongs to the adenylyl cyclase class-4/guanylyl cyclase family. Expressed bilaterally in ASK, ASI and ASJ sensory neurons.

The protein resides in the cell membrane. The catalysed reaction is GTP = 3',5'-cyclic GMP + diphosphate. In terms of biological role, guanylate cyclase involved in the production of the second messenger cGMP. May be involved in sensitivity to quinine by regulating egl-4 activity through the production of cGMP. Promotes the calcium flux to the cytoplasm in ASJ sensory neurons upon removal of a nitric oxide (NO) stimulus and is thereby involved in the behavioral avoidance response to NO-producing organisms like P.aeruginosa. This Caenorhabditis elegans protein is Receptor-type guanylate cyclase gcy-27.